A 247-amino-acid polypeptide reads, in one-letter code: Proteasome subunit alpha type-7-B (247 aa).

Belongs to the peptidase T1A family. As to quaternary structure, the 26S proteasome consists of a 20S proteasome core and two 19S regulatory subunits. The 20S proteasome core is composed of 28 subunits that are arranged in four stacked rings, resulting in a barrel-shaped structure. The two end rings are each formed by seven alpha subunits, and the two central rings are each formed by seven beta subunits. The catalytic chamber with the active sites is on the inside of the barrel. Post-translationally, phosphorylated in G2 phase.

The protein localises to the cytoplasm. It localises to the nucleus. The proteasome is a multicatalytic proteinase complex which is characterized by its ability to cleave peptides with Arg, Phe, Tyr, Leu, and Glu adjacent to the leaving group at neutral or slightly basic pH. The proteasome has an ATP-dependent proteolytic activity. The polypeptide is Proteasome subunit alpha type-7-B (psma7-b) (Xenopus laevis (African clawed frog)).